The sequence spans 427 residues: Hydroxylamine reductase (427 aa).

Residues Cys-3, Cys-6, Cys-15, and Cys-21 each coordinate [4Fe-4S] cluster. Hybrid [4Fe-2O-2S] cluster is bound by residues His-129, Glu-153, Cys-197, Cys-283, Cys-311, Cys-336, Glu-370, and Lys-372. The residue at position 283 (Cys-283) is a Cysteine persulfide.

The protein belongs to the HCP family. Requires [4Fe-4S] cluster as cofactor. The cofactor is hybrid [4Fe-2O-2S] cluster.

The protein resides in the cytoplasm. It carries out the reaction A + NH4(+) + H2O = hydroxylamine + AH2 + H(+). Functionally, catalyzes the reduction of hydroxylamine to form NH(3) and H(2)O. This Methanothermobacter thermautotrophicus (strain ATCC 29096 / DSM 1053 / JCM 10044 / NBRC 100330 / Delta H) (Methanobacterium thermoautotrophicum) protein is Hydroxylamine reductase.